We begin with the raw amino-acid sequence, 160 residues long: uncharacterized protein (160 aa).

This sequence to A.fulgidus AF1717.

This is an uncharacterized protein from Bacillus subtilis (strain 168).